We begin with the raw amino-acid sequence, 445 residues long: FAS-associated factor 2 (445 aa).

Ala2 is modified (N-acetylalanine). Positions 12–48 (EQTEKLLQFQDLTGIESMEQCRLALEQHNWNMEAAVQ) constitute a UBA domain. Lys167 is modified (N6-acetyllysine). Positions 275–350 (SERLEREERN…EEKERKLECL (76 aa)) form a coiled coil. The tract at residues 300-361 (SLRADQEKER…PEPSPDDPES (62 aa)) is disordered. A compositionally biased stretch (basic and acidic residues) spans 303-348 (ADQEKERKKREEKERKRRKEEEVQQQKLAEERRRQNLQEEKERKLE). In terms of domain architecture, UBX spans 357 to 439 (DDPESVKIIF…GLSHTEVLFV (83 aa)).

As to quaternary structure, identified in a complex that contains SEL1L, OS9, FAF2/UBXD8, UBE2J1/UBC6E and AUP1. Interacts with YOD1. Interacts (via N-terminus) with UBQLN2 (via C-terminus). Interacts with PNPLA2. Interacts with ZFAND2B; probably through VCP. Interacts with LMBR1L and UBAC2.

It localises to the cytoplasm. It is found in the lipid droplet. The protein localises to the endoplasmic reticulum. In terms of biological role, plays an important role in endoplasmic reticulum-associated degradation (ERAD) that mediates ubiquitin-dependent degradation of misfolded endoplasmic reticulum proteins. By controlling the steady-state expression of the IGF1R receptor, indirectly regulates the insulin-like growth factor receptor signaling pathway. Involved in inhibition of lipid droplet degradation by binding to phospholipase PNPL2 and inhibiting its activity by promoting dissociation of PNPL2 from its endogenous activator, ABHD5 which inhibits the rate of triacylglycerol hydrolysis. Involved in stress granule disassembly: associates with ubiquitinated G3BP1 in response to heat shock, thereby promoting interaction between ubiquitinated G3BP1 and VCP, followed by G3BP1 extraction from stress granules and stress granule disassembly. This Mus musculus (Mouse) protein is FAS-associated factor 2 (Faf2).